Consider the following 492-residue polypeptide: Glutamyl-tRNA(Gln) amidotransferase subunit A (492 aa).

Catalysis depends on charge relay system residues Lys78 and Ser158. The active-site Acyl-ester intermediate is the Ser182.

It belongs to the amidase family. GatA subfamily. As to quaternary structure, heterotrimer of A, B and C subunits.

It catalyses the reaction L-glutamyl-tRNA(Gln) + L-glutamine + ATP + H2O = L-glutaminyl-tRNA(Gln) + L-glutamate + ADP + phosphate + H(+). Allows the formation of correctly charged Gln-tRNA(Gln) through the transamidation of misacylated Glu-tRNA(Gln) in organisms which lack glutaminyl-tRNA synthetase. The reaction takes place in the presence of glutamine and ATP through an activated gamma-phospho-Glu-tRNA(Gln). The polypeptide is Glutamyl-tRNA(Gln) amidotransferase subunit A (Rhodopseudomonas palustris (strain ATCC BAA-98 / CGA009)).